Consider the following 291-residue polypeptide: tRNA pseudouridine synthase B (291 aa).

Asp-41 acts as the Nucleophile in catalysis.

It belongs to the pseudouridine synthase TruB family. Type 1 subfamily.

The enzyme catalyses uridine(55) in tRNA = pseudouridine(55) in tRNA. Responsible for synthesis of pseudouridine from uracil-55 in the psi GC loop of transfer RNAs. The sequence is that of tRNA pseudouridine synthase B from Parasynechococcus marenigrum (strain WH8102).